The chain runs to 557 residues: Formate--tetrahydrofolate ligase 1 (557 aa).

66 to 73 (TPAGEGKT) lines the ATP pocket.

It belongs to the formate--tetrahydrofolate ligase family.

It carries out the reaction (6S)-5,6,7,8-tetrahydrofolate + formate + ATP = (6R)-10-formyltetrahydrofolate + ADP + phosphate. The protein operates within one-carbon metabolism; tetrahydrofolate interconversion. The sequence is that of Formate--tetrahydrofolate ligase 1 from Streptococcus sanguinis (strain SK36).